A 145-amino-acid chain; its full sequence is D-aminoacyl-tRNA deacylase (145 aa).

Positions 137–138 (GP) match the Gly-cisPro motif, important for rejection of L-amino acids motif.

It belongs to the DTD family. As to quaternary structure, homodimer.

Its subcellular location is the cytoplasm. The catalysed reaction is glycyl-tRNA(Ala) + H2O = tRNA(Ala) + glycine + H(+). It catalyses the reaction a D-aminoacyl-tRNA + H2O = a tRNA + a D-alpha-amino acid + H(+). Functionally, an aminoacyl-tRNA editing enzyme that deacylates mischarged D-aminoacyl-tRNAs. Also deacylates mischarged glycyl-tRNA(Ala), protecting cells against glycine mischarging by AlaRS. Acts via tRNA-based rather than protein-based catalysis; rejects L-amino acids rather than detecting D-amino acids in the active site. By recycling D-aminoacyl-tRNA to D-amino acids and free tRNA molecules, this enzyme counteracts the toxicity associated with the formation of D-aminoacyl-tRNA entities in vivo and helps enforce protein L-homochirality. The polypeptide is D-aminoacyl-tRNA deacylase (Escherichia coli O7:K1 (strain IAI39 / ExPEC)).